The following is a 540-amino-acid chain: ADP,ATP carrier protein 2 (540 aa).

A run of 12 helical transmembrane segments spans residues 23 to 43, 61 to 81, 93 to 113, 150 to 170, 185 to 205, 222 to 242, 292 to 312, 334 to 354, 361 to 381, 389 to 409, 455 to 475, and 477 to 497; these read FSKFIPLFFLAFFVGVNYALL, VIPFLKVWGIVPGAVIVTMIY, VFISLVGGFLGFFALFATVIY, LYYVMSELWSSIVLSTLFWGV, ALINTGLNLSSVFAGEVSLWL, EVLLNITLLIVLAGGVILYLY, LLGIAVVVLSYNLVIHLFEVV, ITTLTGIVSALTGIFAAGQTI, IGALVPPLTMLITGALFFGAI, MIFGGILGISPLVLTAWLGGV, SGGSLVYQGLLIIFSSVAASL, and AITIVLLLALGSWIFVIAWLG.

The protein belongs to the ADP/ATP translocase tlc family.

The protein resides in the cell membrane. The polypeptide is ADP,ATP carrier protein 2 (tlcB) (Chlamydia trachomatis serovar D (strain ATCC VR-885 / DSM 19411 / UW-3/Cx)).